A 221-amino-acid polypeptide reads, in one-letter code: Fanconi anemia core complex-associated protein 24 (221 aa).

Belongs to the multisubunit FA complex composed of FANCA, FANCB, FANCC, FANCE, FANCF, FANCG, FANCL/PHF9, FANCM and FAAP24. Interacts with FANCM.

The protein localises to the nucleus. In terms of biological role, plays a role in DNA repair through recruitment of the FA core complex to damaged DNA. Regulates FANCD2 monoubiquitination upon DNA damage. Induces chromosomal instability as well as hypersensitivity to DNA cross-linking agents, when repressed. Targets FANCM/FAAP24 complex to the DNA, preferentially to single strand DNA. This is Fanconi anemia core complex-associated protein 24 from Mus musculus (Mouse).